The primary structure comprises 248 residues: uncharacterized protein (248 aa).

This is an uncharacterized protein from Escherichia coli (Bacteriophage T4).